We begin with the raw amino-acid sequence, 131 residues long: Sulfurtransferase TusD (131 aa).

Cys-81 functions as the Cysteine persulfide intermediate in the catalytic mechanism.

Belongs to the DsrE/TusD family. As to quaternary structure, heterohexamer, formed by a dimer of trimers. The hexameric TusBCD complex contains 2 copies each of TusB, TusC and TusD. The TusBCD complex interacts with TusE.

The protein resides in the cytoplasm. Its function is as follows. Part of a sulfur-relay system required for 2-thiolation of 5-methylaminomethyl-2-thiouridine (mnm(5)s(2)U) at tRNA wobble positions. Accepts sulfur from TusA and transfers it in turn to TusE. This Yersinia pseudotuberculosis serotype O:1b (strain IP 31758) protein is Sulfurtransferase TusD.